Consider the following 316-residue polypeptide: Pantothenate kinase (316 aa).

Residue 95–102 (GSVAVGKS) coordinates ATP.

It belongs to the prokaryotic pantothenate kinase family.

Its subcellular location is the cytoplasm. The catalysed reaction is (R)-pantothenate + ATP = (R)-4'-phosphopantothenate + ADP + H(+). It functions in the pathway cofactor biosynthesis; coenzyme A biosynthesis; CoA from (R)-pantothenate: step 1/5. The polypeptide is Pantothenate kinase (Shewanella sediminis (strain HAW-EB3)).